The chain runs to 619 residues: Histone H3.v1 (619 aa).

A compositionally biased stretch (basic and acidic residues) spans 1 to 15; it reads MANKPKPSEHLRDLI. 2 disordered regions span residues 1 to 99 and 190 to 526; these read MANK…GSSR and ILPS…RKKR. 2 stretches are compositionally biased toward low complexity: residues 28 to 50 and 66 to 99; these read QLKQQQQPRQTQPSRPSSSLTQS and STSESSGSSRSPASSGSSRSSGSSGSSRLSGSSR. Over residues 230-287 the composition is skewed to acidic residues; that stretch reads DQEEEEEEEEEEEEEEEEEEEEEEEEEEEEEEEEEEEEEEEEEEEEEEEEEEEEEEEV. 2 stretches are compositionally biased toward low complexity: residues 296-306 and 314-325; these read GKPLPSPSLSS and SSSVASSESSKQ. Residues 326–344 show a composition bias toward basic residues; the sequence is SRVKVSKKPSPLIKKKPAP. Low complexity-rich tracts occupy residues 345 to 360, 385 to 408, and 415 to 521; these read IKKVTTPTRSKQQQQS, KNVLSSSSSSPSSSSSSSSSLTPT, and IVTT…TPTT.

Belongs to the histone H3 family.

In Dictyostelium discoideum (Social amoeba), this protein is Histone H3.v1 (H3v1).